Consider the following 106-residue polypeptide: 3-oxoacyl-[acyl-carrier-protein] reductase (106 aa).

This sequence belongs to the short-chain dehydrogenases/reductases (SDR) family. Homotetramer. As to expression, mesocarp.

The protein resides in the plastid. It is found in the chloroplast. It catalyses the reaction a (3R)-hydroxyacyl-[ACP] + NADP(+) = a 3-oxoacyl-[ACP] + NADPH + H(+). Its pathway is lipid metabolism; fatty acid biosynthesis. The protein is 3-oxoacyl-[acyl-carrier-protein] reductase of Persea americana (Avocado).